A 283-amino-acid chain; its full sequence is tRNA-cytidine(32) 2-sulfurtransferase (283 aa).

The short motif at 37-42 is the PP-loop motif element; the sequence is SGGKDS. Residues Cys-112, Cys-115, and Cys-203 each contribute to the [4Fe-4S] cluster site.

Belongs to the TtcA family. In terms of assembly, homodimer. Mg(2+) serves as cofactor. [4Fe-4S] cluster is required as a cofactor.

It is found in the cytoplasm. It catalyses the reaction cytidine(32) in tRNA + S-sulfanyl-L-cysteinyl-[cysteine desulfurase] + AH2 + ATP = 2-thiocytidine(32) in tRNA + L-cysteinyl-[cysteine desulfurase] + A + AMP + diphosphate + H(+). It functions in the pathway tRNA modification. In terms of biological role, catalyzes the ATP-dependent 2-thiolation of cytidine in position 32 of tRNA, to form 2-thiocytidine (s(2)C32). The sulfur atoms are provided by the cysteine/cysteine desulfurase (IscS) system. This is tRNA-cytidine(32) 2-sulfurtransferase from Legionella pneumophila subsp. pneumophila (strain Philadelphia 1 / ATCC 33152 / DSM 7513).